Here is a 131-residue protein sequence, read N- to C-terminus: uncharacterized protein (131 aa).

The next 3 helical transmembrane spans lie at arginine 13–isoleucine 35, leucine 60–cysteine 79, and leucine 100–threonine 119.

The protein localises to the membrane. This is an uncharacterized protein from Saccharomyces cerevisiae (strain ATCC 204508 / S288c) (Baker's yeast).